Here is a 398-residue protein sequence, read N- to C-terminus: MAKSQRTAVVLVAAGRGLRAGAGGPKQYREIGGQPVIYRAMEAFSRHPDVFAVQPVVNPDDSAMFTAAVAGLKHEPPTNGGATRQASVLAGLEALAKHQPDIVLIHDAARPFVSDGVISRAIDAASRTGAAIPVVPVTDTIKLTGASGNVEDTPDRARLRIAQTPQSFRFDVILEAHRRAAKDGRSDFTDDAAIAEWAGLTVATFEGDVANMKLTTPEDFVREEARLAAQLGDIRTGTGYDVHAFGEGDHVMICGVRVPHSKGFLAHSDGDVGLHALVDAILGALADGDIGSHFPPSDAKWKGASSDQFLKYAIERVAQRGGRVANLEVTMICERPKIGPLRDTMRARIAEISGVDISRVAVKATTSERLGFTGREEGIAATASATIRLPFNEKTWSV.

Positions 1 to 234 (MAKSQRTAVV…ARLAAQLGDI (234 aa)) are 2-C-methyl-D-erythritol 4-phosphate cytidylyltransferase. The interval 235-398 (RTGTGYDVHA…LPFNEKTWSV (164 aa)) is 2-C-methyl-D-erythritol 2,4-cyclodiphosphate synthase. Residues D241 and H243 each coordinate a divalent metal cation. 4-CDP-2-C-methyl-D-erythritol 2-phosphate is bound by residues 241-243 (DVH) and 267-268 (HS). H275 serves as a coordination point for a divalent metal cation. 4-CDP-2-C-methyl-D-erythritol 2-phosphate contacts are provided by residues 289 to 291 (DIG), 365 to 368 (TTSE), F372, and R375.

The protein in the N-terminal section; belongs to the IspD/TarI cytidylyltransferase family. IspD subfamily. This sequence in the C-terminal section; belongs to the IspF family. The cofactor is a divalent metal cation.

It catalyses the reaction 2-C-methyl-D-erythritol 4-phosphate + CTP + H(+) = 4-CDP-2-C-methyl-D-erythritol + diphosphate. The catalysed reaction is 4-CDP-2-C-methyl-D-erythritol 2-phosphate = 2-C-methyl-D-erythritol 2,4-cyclic diphosphate + CMP. Its pathway is isoprenoid biosynthesis; isopentenyl diphosphate biosynthesis via DXP pathway; isopentenyl diphosphate from 1-deoxy-D-xylulose 5-phosphate: step 2/6. It participates in isoprenoid biosynthesis; isopentenyl diphosphate biosynthesis via DXP pathway; isopentenyl diphosphate from 1-deoxy-D-xylulose 5-phosphate: step 4/6. Its function is as follows. Bifunctional enzyme that catalyzes the formation of 4-diphosphocytidyl-2-C-methyl-D-erythritol from CTP and 2-C-methyl-D-erythritol 4-phosphate (MEP) (IspD), and catalyzes the conversion of 4-diphosphocytidyl-2-C-methyl-D-erythritol 2-phosphate (CDP-ME2P) to 2-C-methyl-D-erythritol 2,4-cyclodiphosphate (ME-CPP) with a corresponding release of cytidine 5-monophosphate (CMP) (IspF). The protein is Bifunctional enzyme IspD/IspF of Bradyrhizobium diazoefficiens (strain JCM 10833 / BCRC 13528 / IAM 13628 / NBRC 14792 / USDA 110).